Here is a 352-residue protein sequence, read N- to C-terminus: Phosphoribosylformylglycinamidine cyclo-ligase (352 aa).

This sequence belongs to the AIR synthase family.

It localises to the cytoplasm. The catalysed reaction is 2-formamido-N(1)-(5-O-phospho-beta-D-ribosyl)acetamidine + ATP = 5-amino-1-(5-phospho-beta-D-ribosyl)imidazole + ADP + phosphate + H(+). It functions in the pathway purine metabolism; IMP biosynthesis via de novo pathway; 5-amino-1-(5-phospho-D-ribosyl)imidazole from N(2)-formyl-N(1)-(5-phospho-D-ribosyl)glycinamide: step 2/2. In Azoarcus sp. (strain BH72), this protein is Phosphoribosylformylglycinamidine cyclo-ligase.